A 389-amino-acid chain; its full sequence is SH3 and F-BAR domain-containing protein DDB_G0274695 (389 aa).

An F-BAR domain is found at 3-258 (EQFKDNFWGP…VITQIDKLED (256 aa)). Residues 119 to 192 (KLNKERKDME…QDYRDSVNKL (74 aa)) adopt a coiled-coil conformation. The span at 300-328 (LTSSVSSNSLTSSYNSATTTPTPAPRSTP) shows a compositional bias: low complexity. The tract at residues 300 to 329 (LTSSVSSNSLTSSYNSATTTPTPAPRSTPI) is disordered. An SH3 domain is found at 332–389 (SKKKQAKALYDYVGSDATELDFFAGDIITILDEDESGWFRGELGDRIGLYPSNYCEPI).

In Dictyostelium discoideum (Social amoeba), this protein is SH3 and F-BAR domain-containing protein DDB_G0274695.